We begin with the raw amino-acid sequence, 242 residues long: Thaumatin-like protein 2 (242 aa).

Residues 1-23 (MMKTLGAVLSLSLTLLSFGGAHA) form the signal peptide. Cystine bridges form between C32/C241, C77/C87, C92/C99, C147/C230, C152/C213, C160/C176, C180/C189, and C190/C200.

The protein belongs to the thaumatin family. In terms of tissue distribution, preferentially expressed in the abscission zone of fruit. Also expressed in leaf abscission zone.

The protein localises to the secreted. In terms of biological role, may be involved in protecting plant tissues from pathogen infection. This chain is Thaumatin-like protein 2, found in Prunus persica (Peach).